A 210-amino-acid chain; its full sequence is Dephospho-CoA kinase (210 aa).

One can recognise a DPCK domain in the interval 4–202; it reads WVGLTGGIGS…AFYSGIFASK (199 aa). Residue 12 to 17 coordinates ATP; sequence GSGKSA.

The protein belongs to the CoaE family.

The protein resides in the cytoplasm. The enzyme catalyses 3'-dephospho-CoA + ATP = ADP + CoA + H(+). It functions in the pathway cofactor biosynthesis; coenzyme A biosynthesis; CoA from (R)-pantothenate: step 5/5. Functionally, catalyzes the phosphorylation of the 3'-hydroxyl group of dephosphocoenzyme A to form coenzyme A. The chain is Dephospho-CoA kinase from Neisseria meningitidis serogroup A / serotype 4A (strain DSM 15465 / Z2491).